Consider the following 626-residue polypeptide: Chaperone protein HtpG (626 aa).

Positions 1-331 (MSETVERHEF…TDDLPLNVSR (331 aa)) are a; substrate-binding. Residues 332–544 (EMLQSTPTLQ…GMGPDLQMQR (213 aa)) form a b region. Residues 545 to 626 (LLRRAGRGFG…GTVAKPAESA (82 aa)) are c.

The protein belongs to the heat shock protein 90 family. In terms of assembly, homodimer.

It is found in the cytoplasm. Functionally, molecular chaperone. Has ATPase activity. This is Chaperone protein HtpG from Methylorubrum populi (strain ATCC BAA-705 / NCIMB 13946 / BJ001) (Methylobacterium populi).